The sequence spans 141 residues: 6,7-dimethyl-8-ribityllumazine synthase (141 aa).

5-amino-6-(D-ribitylamino)uracil is bound by residues phenylalanine 13, 45-47, and 69-71; these read SFE and AII. Residue 74-75 participates in (2S)-2-hydroxy-3-oxobutyl phosphate binding; it reads DT. The active-site Proton donor is histidine 77. Residue leucine 102 participates in 5-amino-6-(D-ribitylamino)uracil binding. Arginine 117 serves as a coordination point for (2S)-2-hydroxy-3-oxobutyl phosphate.

This sequence belongs to the DMRL synthase family.

It carries out the reaction (2S)-2-hydroxy-3-oxobutyl phosphate + 5-amino-6-(D-ribitylamino)uracil = 6,7-dimethyl-8-(1-D-ribityl)lumazine + phosphate + 2 H2O + H(+). The protein operates within cofactor biosynthesis; riboflavin biosynthesis; riboflavin from 2-hydroxy-3-oxobutyl phosphate and 5-amino-6-(D-ribitylamino)uracil: step 1/2. In terms of biological role, catalyzes the formation of 6,7-dimethyl-8-ribityllumazine by condensation of 5-amino-6-(D-ribitylamino)uracil with 3,4-dihydroxy-2-butanone 4-phosphate. This is the penultimate step in the biosynthesis of riboflavin. The sequence is that of 6,7-dimethyl-8-ribityllumazine synthase from Methanopyrus kandleri (strain AV19 / DSM 6324 / JCM 9639 / NBRC 100938).